A 257-amino-acid chain; its full sequence is BTB/POZ domain-containing protein KCTD1 (257 aa).

Positions 1 to 25 (MSRPLITRSPASPLNNQGIPTPAQL) are disordered. Phosphoserine is present on residues serine 9 and serine 12. Residues 9 to 25 (SPASPLNNQGIPTPAQL) are compositionally biased toward polar residues. The BTB domain occupies 30–100 (APVHIDVGGH…LRTSKLLIPD (71 aa)).

Forms homopentamers. Interacts with KCTD15, probably forming heteropentamers depending on its abundance in a cell-type dependent manner. Interacts with TFAP2A, TFAP2B and TFAP2C via the BTB domain. Post-translationally, sumoylated.

The protein resides in the nucleus. In terms of biological role, may repress the transcriptional activity of AP-2 family members, including TFAP2A, TFAP2B and TFAP2C to various extent. The protein is BTB/POZ domain-containing protein KCTD1 (KCTD1) of Bos taurus (Bovine).